The primary structure comprises 290 residues: Small ribosomal subunit biogenesis GTPase RsgA (290 aa).

Positions 62–219 (RTCLKRPAVA…VADTPGFSRL (158 aa)) constitute a CP-type G domain. Residues 111–114 (NKAD) and 161–169 (GPSGVGKSS) contribute to the GTP site. Positions 243, 248, 250, and 256 each coordinate Zn(2+).

It belongs to the TRAFAC class YlqF/YawG GTPase family. RsgA subfamily. Monomer. Associates with 30S ribosomal subunit, binds 16S rRNA. It depends on Zn(2+) as a cofactor.

The protein localises to the cytoplasm. In terms of biological role, one of several proteins that assist in the late maturation steps of the functional core of the 30S ribosomal subunit. Helps release RbfA from mature subunits. May play a role in the assembly of ribosomal proteins into the subunit. Circularly permuted GTPase that catalyzes slow GTP hydrolysis, GTPase activity is stimulated by the 30S ribosomal subunit. This chain is Small ribosomal subunit biogenesis GTPase RsgA, found in Moorella thermoacetica (strain ATCC 39073 / JCM 9320).